The sequence spans 278 residues: Aquaporin NIP3-3 (278 aa).

A run of 2 helical transmembrane segments spans residues 70–90 (VSAEFFGTFILIFTVLSTIIM) and 99–119 (TLLGIATSAGLAVTVLVLSLI). Positions 127–129 (NPA) match the NPA 1 motif. The next 3 helical transmembrane spans lie at 141 to 163 (PSAHLLPYISSQILGAVAASFAV), 185 to 205 (AFFVEFIITFFLLFIITALAT), and 213 to 233 (LIAVAVGATVMMNILVAGPST). The short motif at 238–240 (NPA) is the NPA 2 element. The chain crosses the membrane as a helical span at residues 255-275 (IWVYLVATPLGAIAGTGAYVA).

It belongs to the MIP/aquaporin (TC 1.A.8) family. NIP (TC 1.A.8.12) subfamily. In terms of tissue distribution, expressed in leaves and at lower levels in roots and anthers.

It is found in the membrane. Aquaporins facilitate the transport of water and small neutral solutes across cell membranes. This is Aquaporin NIP3-3 (NIP3-3) from Oryza sativa subsp. japonica (Rice).